Here is a 398-residue protein sequence, read N- to C-terminus: Lipase member N (398 aa).

A signal peptide spans 1–18; the sequence is MMWLLLTTTCLICGTLNA. An AB hydrolase-1 domain is found at 79–379; sequence PVVYMQHALF…DWNHFDFVWG (301 aa). S173 serves as the catalytic Nucleophile. C247 and C256 are joined by a disulfide. N272 is a glycosylation site (N-linked (GlcNAc...) asparagine). Catalysis depends on charge relay system residues D344 and H373.

The protein belongs to the AB hydrolase superfamily. Lipase family. In terms of tissue distribution, highly expressed in the epidermis in the granular keratinocytes. Also detected in other tissues, although at much lower levels, including lung and spleen.

The protein localises to the secreted. It catalyses the reaction a sterol ester + H2O = a sterol + a fatty acid + H(+). It carries out the reaction a triacylglycerol + H2O = a 1,2-diacylglycerol + a fatty acid + H(+). The enzyme catalyses a triacylglycerol + H2O = a diacylglycerol + a fatty acid + H(+). The catalysed reaction is a cholesterol ester + H2O = cholesterol + a fatty acid + H(+). In terms of biological role, plays a highly specific role in the last step of keratinocyte differentiation. Contains two distinct domains: the alpha/beta hydrolase fold and the abhydrolase-associated lipase region, also features the consensus sequence of the active site of a genuine lipase. May have an essential function in lipid metabolism of the most differentiated epidermal layers. This chain is Lipase member N (LIPN), found in Homo sapiens (Human).